We begin with the raw amino-acid sequence, 220 residues long: Putative cobalt transport protein CbiM (220 aa).

The next 6 helical transmembrane spans lie at 6–26 (GFLP…VISY), 45–65 (IAVA…SVTG), 74–94 (GIAV…IVLL), 107–127 (TLGA…WVVF), 153–173 (LVTS…AGVV), and 188–208 (IPIG…IAMS).

The protein belongs to the CbiM family. As to quaternary structure, forms an energy-coupling factor (ECF) transporter complex composed of an ATP-binding protein (A component, CbiO), a transmembrane protein (T component, CbiQ) and 2 possible substrate-capture proteins (S components, CbiM and CbiN) of unknown stoichimetry.

It localises to the cell membrane. It functions in the pathway cofactor biosynthesis; adenosylcobalamin biosynthesis. Part of the energy-coupling factor (ECF) transporter complex CbiMNOQ involved in cobalt import. The protein is Putative cobalt transport protein CbiM of Halobacterium salinarum (strain ATCC 29341 / DSM 671 / R1).